The sequence spans 20 residues: KLQLPTLDDPVPIGIAPAIT.

The protein is Unknown protein NF007 from 2D-PAGE of Naegleria fowleri (Brain eating amoeba).